The chain runs to 779 residues: Mediator of RNA polymerase II transcription subunit 15 (779 aa).

Polar residues-rich tracts occupy residues 70–90 and 98–108; these read NKNQQNPAGGSQDGGNPNQQG and ALQTLATQGTR. Disordered stretches follow at residues 70-131, 209-407, 437-512, and 629-649; these read NKNQ…GGNA, NPMQ…VPIG, FLRQ…NPQE, and PAKQPRLAIDEPSTSGSTGSQ. Over residues 114 to 130 the composition is skewed to gly residues; sequence GQMGPGGPMGNQMGGGN. Composition is skewed to low complexity over residues 209–232 and 240–270; these read NPMQMGVSGMPQGAGQQQPQQPQG and PNQMNPMGGMGMQVNPGGHMNQNAINQQMNQ. Gly residues predominate over residues 274-284; that stretch reads SSGGNQMGNLG. Low complexity-rich tracts occupy residues 285–295, 304–329, and 339–350; these read GNSPMNPGNMG, QQMPPGMNPNQQQLGMAGGQMNQMNQ, and GPVQQQQQPGQV. Residues 351–361 show a composition bias toward gly residues; that stretch reads GMAGMGPGGPG. Composition is skewed to low complexity over residues 362 to 383, 393 to 402, and 451 to 468; these read NLQQQNNPQQQSQGGPNAAPGQ, NMQAMGNQGN, and GPGSIGPQSHPGQMIPSP. Composition is skewed to polar residues over residues 477 to 500 and 640 to 649; these read QVSSNIPAPRNIGQSPGQSLNTPG and PSTSGSTGSQ.

This sequence belongs to the Mediator complex subunit 15 family. In terms of assembly, component of the Mediator complex.

It localises to the nucleus. Functionally, component of the Mediator complex, a coactivator involved in the regulated transcription of nearly all RNA polymerase II-dependent genes. Mediator functions as a bridge to convey information from gene-specific regulatory proteins to the basal RNA polymerase II transcription machinery. Mediator is recruited to promoters by direct interactions with regulatory proteins and serves as a scaffold for the assembly of a functional preinitiation complex with RNA polymerase II and the general transcription factors. This chain is Mediator of RNA polymerase II transcription subunit 15 (MED15), found in Aedes aegypti (Yellowfever mosquito).